The primary structure comprises 544 residues: Phenylalanine--tRNA ligase beta subunit (544 aa).

A B5 domain is found at 268-343 (LIHKIQNVRE…MSIGYNNLEP (76 aa)). Positions 321, 327, 330, and 331 each coordinate Mg(2+).

This sequence belongs to the phenylalanyl-tRNA synthetase beta subunit family. Type 2 subfamily. In terms of assembly, tetramer of two alpha and two beta subunits. The cofactor is Mg(2+).

The protein localises to the cytoplasm. It catalyses the reaction tRNA(Phe) + L-phenylalanine + ATP = L-phenylalanyl-tRNA(Phe) + AMP + diphosphate + H(+). The chain is Phenylalanine--tRNA ligase beta subunit from Saccharolobus solfataricus (strain ATCC 35092 / DSM 1617 / JCM 11322 / P2) (Sulfolobus solfataricus).